Reading from the N-terminus, the 261-residue chain is Thiamine thiazole synthase (261 aa).

NAD(+)-binding positions include S40, 59–60, G67, V133, and 159–161; these read ER and HID. 2 residues coordinate Fe cation: D161 and H176. Positions 179 and 226 each coordinate NAD(+). R236 serves as a coordination point for glycine.

It belongs to the THI4 family. In terms of assembly, homooctamer; tetramer of dimers. The cofactor is Fe(2+).

It carries out the reaction hydrogen sulfide + glycine + NAD(+) = ADP-5-ethyl-4-methylthiazole-2-carboxylate + nicotinamide + 3 H2O + H(+). The protein operates within cofactor biosynthesis; thiamine diphosphate biosynthesis. Functionally, involved in the biosynthesis of the thiazole moiety of thiamine. Catalyzes the conversion of NAD and glycine to adenosine diphosphate 5-(2-hydroxyethyl)-4-methylthiazole-2-carboxylate (ADT), an adenylated thiazole intermediate, using free sulfide as a source of sulfur. This chain is Thiamine thiazole synthase, found in Methanococcus maripaludis (strain C5 / ATCC BAA-1333).